Reading from the N-terminus, the 435-residue chain is Hyaluronidase-1 (435 aa).

A signal peptide spans 1–21; it reads MAAHLLPICTLFLNLLSVAQG. 2 cysteine pairs are disulfide-bonded: C43/C333 and C207/C221. N70, N99, N107, and N121 each carry an N-linked (GlcNAc...) asparagine glycan. The Proton donor role is filled by E131. 3 N-linked (GlcNAc...) asparagine glycosylation sites follow: N216, N256, and N350. Intrachain disulfides connect C358–C369, C363–C418, and C420–C429. Positions 418-429 constitute an EGF-like domain; that stretch reads CRCYPGWRGTWC.

Belongs to the glycosyl hydrolase 56 family. As to expression, highly expressed in spleen, kidney, and lung.

The protein localises to the secreted. The protein resides in the lysosome. The enzyme catalyses Random hydrolysis of (1-&gt;4)-linkages between N-acetyl-beta-D-glucosamine and D-glucuronate residues in hyaluronate.. In terms of biological role, may have a role in promoting tumor progression. May block the TGFB1-enhanced cell growth. The sequence is that of Hyaluronidase-1 (HYAL1) from Sus scrofa (Pig).